Consider the following 127-residue polypeptide: uncharacterized protein (127 aa).

The N-terminal stretch at 1–23 is a signal peptide; that stretch reads MSKPLKFLLWSSLALLLLQIGSG.

This is an uncharacterized protein from Arabidopsis thaliana (Mouse-ear cress).